A 475-amino-acid chain; its full sequence is Equilibrative nucleoside transporter 3 (475 aa).

The Cytoplasmic portion of the chain corresponds to 1–51; that stretch reads MAFASEDNVYHSSNAVYRAPSNHQEADQEALLGKLLDYPAPGLQRPEDRFN. Ser21 carries the phosphoserine modification. Residues 31–32 carry the Dileucine internalization motif motif; the sequence is LL. A helical membrane pass occupies residues 52 to 72; that stretch reads GAYIIFFCLGIGGLLPWNFFV. Topologically, residues 73–105 are extracellular; that stretch reads TAKEYWAYKLRNCSSPASGEDPEDMDILNYFES. Asn84 carries an N-linked (GlcNAc...) asparagine glycan. The helical transmembrane segment at 106-126 threads the bilayer; sequence YLAVASTVPSLLFLVANFLLV. The Cytoplasmic segment spans residues 127–134; sequence NRVQVHVR. A helical transmembrane segment spans residues 135–155; sequence VLASLSVSLAIFVVMIVLVKV. Topologically, residues 156 to 162 are extracellular; that stretch reads DTSSWTR. The helical transmembrane segment at 163–183 threads the bilayer; the sequence is GFFSLTIACMAIISSSSTIFN. Residues 184-199 lie on the Cytoplasmic side of the membrane; it reads SSVYGLTGSFPMRNAQ. Residues 200-220 traverse the membrane as a helical segment; the sequence is ALISGGAMGGTVSAVALLVDL. Topologically, residues 221–230 are extracellular; it reads AASSDVRDST. A helical transmembrane segment spans residues 231-251; that stretch reads LAFFLMAAVFLGLCMGLYLLL. Over 252–305 the chain is Cytoplasmic; that stretch reads SQLEYARYYMRPVAPVRVFSGEDNPSQDAPSASSVAPASRVMHTPPLGPILKKT. A helical membrane pass occupies residues 306–326; it reads ASLGFCAVSLYFVTAFIIPAI. The Extracellular portion of the chain corresponds to 327–340; sequence STNIQSMHKGTGSP. Residues 341–361 traverse the membrane as a helical segment; the sequence is WTSKFFVPLTVFLLFNFADLC. Topologically, residues 362–377 are cytoplasmic; it reads GRQVTAWIQVPGPRSK. The chain crosses the membrane as a helical span at residues 378–398; the sequence is LLPGLVVSRFCLVPLFLLCNY. Residues 399–415 are Extracellular-facing; it reads QPRSHLTKVLFQSDIYP. Residues 416–436 traverse the membrane as a helical segment; that stretch reads VLFTCLLGLSNGYLSTLVLIY. Residues 437-450 lie on the Cytoplasmic side of the membrane; sequence GPKIVPRELAEATS. The helical transmembrane segment at 451 to 471 threads the bilayer; sequence VVMLFYMSVGLMLGSACAALL. The Extracellular portion of the chain corresponds to 472 to 475; sequence EHFI.

It belongs to the SLC29A/ENT transporter (TC 2.A.57) family. Expressed in macrophages.

It is found in the lysosome membrane. Its subcellular location is the late endosome membrane. It localises to the mitochondrion membrane. The protein localises to the cell membrane. The enzyme catalyses adenosine(in) = adenosine(out). It catalyses the reaction guanosine(in) = guanosine(out). It carries out the reaction inosine(in) = inosine(out). The catalysed reaction is uridine(out) = uridine(in). The enzyme catalyses cytidine(in) = cytidine(out). It catalyses the reaction thymidine(in) = thymidine(out). It carries out the reaction 2'-deoxyadenosine(in) = 2'-deoxyadenosine(out). The catalysed reaction is 2'-deoxycytidine(in) = 2'-deoxycytidine(out). The enzyme catalyses guanine(out) = guanine(in). It catalyses the reaction uracil(in) = uracil(out). It carries out the reaction (R)-noradrenaline(out) = (R)-noradrenaline(in). The catalysed reaction is dopamine(out) = dopamine(in). The enzyme catalyses serotonin(out) = serotonin(in). It catalyses the reaction tyramine(in) = tyramine(out). It carries out the reaction ATP(in) = ATP(out). Functionally, uniporter that mediates the facilitative transport of nucleoside across lysosomal and mitochondrial membranes. Functions as a non-electrogenic Na(+)-independent transporter. Substrate transport is pH-dependent and enhanced under acidic condition, probably reflecting the location of the transporter in acidic intracellular compartments. Proton is not a cotransporting ion but most likely change the ionization state of the transporter which dictates transport-permissible/impermissible conformation for nucleoside translocation. May direct the nucleoside transport from lysosomes to cytosol or cytosol to mitochondria to facilitate the fundamental function of salvage synthesis of nucleic acids. Involved in the transport of nucleosides (adenosine, guanosine, uridine, thymidine, cytidine and inosine) and deoxynucleosides (deoxyadenosine, deoxycytidine). Also mediates transport of purine nucleobases (adenine, guanine), and pyrimidine nucleobases (uracil). Also able to transport monoamine neurotransmitters dopamine, serotonin, noradrenaline and tyramine. Capable of transporting ATP. Mediates nucleoside export from lysosomes in macrophages, which regulates macrophage functions and numbers. The protein is Equilibrative nucleoside transporter 3 of Mus musculus (Mouse).